A 335-amino-acid chain; its full sequence is tRNA N6-adenosine threonylcarbamoyltransferase (335 aa).

Fe cation is bound by residues His110 and His114. Residues 132–136 (LVSGG), Asp165, Gly178, and Asn271 contribute to the substrate site. Asp299 provides a ligand contact to Fe cation.

Belongs to the KAE1 / TsaD family. The cofactor is Fe(2+).

It is found in the cytoplasm. The enzyme catalyses L-threonylcarbamoyladenylate + adenosine(37) in tRNA = N(6)-L-threonylcarbamoyladenosine(37) in tRNA + AMP + H(+). Its function is as follows. Required for the formation of a threonylcarbamoyl group on adenosine at position 37 (t(6)A37) in tRNAs that read codons beginning with adenine. Is involved in the transfer of the threonylcarbamoyl moiety of threonylcarbamoyl-AMP (TC-AMP) to the N6 group of A37, together with TsaE and TsaB. TsaD likely plays a direct catalytic role in this reaction. The chain is tRNA N6-adenosine threonylcarbamoyltransferase from Campylobacter jejuni subsp. doylei (strain ATCC BAA-1458 / RM4099 / 269.97).